We begin with the raw amino-acid sequence, 258 residues long: 3-deoxy-manno-octulosonate cytidylyltransferase (258 aa).

Belongs to the KdsB family.

Its subcellular location is the cytoplasm. It carries out the reaction 3-deoxy-alpha-D-manno-oct-2-ulosonate + CTP = CMP-3-deoxy-beta-D-manno-octulosonate + diphosphate. Its pathway is nucleotide-sugar biosynthesis; CMP-3-deoxy-D-manno-octulosonate biosynthesis; CMP-3-deoxy-D-manno-octulosonate from 3-deoxy-D-manno-octulosonate and CTP: step 1/1. It functions in the pathway bacterial outer membrane biogenesis; lipopolysaccharide biosynthesis. Activates KDO (a required 8-carbon sugar) for incorporation into bacterial lipopolysaccharide in Gram-negative bacteria. The polypeptide is 3-deoxy-manno-octulosonate cytidylyltransferase (Nitrobacter hamburgensis (strain DSM 10229 / NCIMB 13809 / X14)).